The sequence spans 253 residues: MTQEELDALMNGGDLENLEALETKEETKEEAKEEAKEEAKEEAKEKEEIKEESSSQKMTVKKEDAEKYGKISPNEWPPPPPTEEHKVVHQLDDVTRDSEVKATQIFDQLDLIGASAEKIAKMVKKIQEPLQKHQEIFDNLHGHFPHVESFKTALNEQQEILNALKSIEEEAANCSDSSMQAMDIMQFQDIHRQKIERVVNVMRALSQYMNSLFEGKIDDSKRVSSATFITGDDDKDLASADDIEALIASFGAK.

A disordered region spans residues 1–84 (MTQEELDALM…EWPPPPPTEE (84 aa)). A compositionally biased stretch (basic and acidic residues) spans 21 to 69 (LETKEETKEEAKEEAKEEAKEEAKEKEEIKEESSSQKMTVKKEDAEKYG).

It belongs to the CheZ family. In terms of assembly, interacts with ChePep; this interaction is essential for each other polar localization.

Its subcellular location is the cytoplasm. Plays an important role in bacterial chemotaxis signal transduction pathway by accelerating the dephosphorylation of phosphorylated CheY (CheY-P). Also dephosphorylates CheV2 but not CheV1 or CheV3. In addition, forms a distinct chemotaxis regulatory complex with ChePep independently of the core chemotaxis signaling proteins. The polypeptide is Protein phosphatase CheZ (Helicobacter pylori (strain ATCC 700392 / 26695) (Campylobacter pylori)).